We begin with the raw amino-acid sequence, 274 residues long: Putative HTH-type transcriptional regulator RmpR (274 aa).

Residues 18 to 88 (IERADAIVER…RSGGTFVVNQ (71 aa)) enclose the HTH gntR-type domain. Positions 46–65 (EAALSEMFGVGGATLREALS) form a DNA-binding region, H-T-H motif. Over residues 250 to 265 (SRPSSPATAPDGSSSA) the composition is skewed to polar residues. The tract at residues 250–274 (SRPSSPATAPDGSSSAEAAMIQEGQ) is disordered.

Its function is as follows. May regulate the transcription of the rmpAB operon. In Mycobacterium gastri, this protein is Putative HTH-type transcriptional regulator RmpR (rmpR).